The chain runs to 385 residues: DNA replication and repair protein RecF (385 aa).

30-37 (GRNGQGKT) contributes to the ATP binding site.

The protein belongs to the RecF family.

It localises to the cytoplasm. Its function is as follows. The RecF protein is involved in DNA metabolism; it is required for DNA replication and normal SOS inducibility. RecF binds preferentially to single-stranded, linear DNA. It also seems to bind ATP. The protein is DNA replication and repair protein RecF of Leifsonia xyli subsp. xyli (strain CTCB07).